The sequence spans 271 residues: Hematopoietically-expressed homeobox protein Hhex (271 aa).

An interaction with SOX13 region spans residues 1 to 138 (MQFPHPGPAA…PFLQRPLHKR (138 aa)). Serine 54 is subject to Phosphoserine. The homeobox DNA-binding region spans 138 to 197 (RKGGQVRFSNDQTVELEKKFETQKYLSPPERKRLAKMLQLSERQVKTWFQNRRAKWRRLK). The required for WNT signaling induction stretch occupies residues 138 to 271 (RKGGQVRFSN…EGDKGYFNAG (134 aa)). The interval 195–271 (RLKQENPQSN…EGDKGYFNAG (77 aa)) is disordered. The span at 212–242 (LDTSCEQGQDLPSEQNKGASLDRSQCSPSPA) shows a compositional bias: polar residues. Positions 245 to 261 (EDPDSEISEDSDQEVDI) are enriched in acidic residues.

As to quaternary structure, interacts with CD81; the interaction prevents nuclear translocation of HHEX. Interacts (via N-terminus) with SOX13; abolishes the SOX13-mediated inhibition of WNT-mediated transcriptional activity via competitive inhibition of the SOX13-TCF7 complex. Interacts with EIF4E; the interaction inhibits EIF4E-mediated mRNA nuclear export.

Its subcellular location is the nucleus. It is found in the nuclear body. The protein localises to the cytoplasm. In terms of biological role, recognizes the DNA sequence 5'-ATTAA-3'. Transcriptional repressor. Activator of WNT-mediated transcription in conjunction with CTNNB1. Establishes anterior identity at two levels; acts early to enhance canonical WNT-signaling by repressing expression of TLE4, and acts later to inhibit NODAL-signaling by directly targeting NODAL. Inhibits EIF4E-mediated mRNA nuclear export. May play a role in hematopoietic differentiation. This Mus musculus (Mouse) protein is Hematopoietically-expressed homeobox protein Hhex (Hhex).